The primary structure comprises 423 residues: Protein TylM3 (423 aa).

Positions 1-21 (MNTAAGPTGTAAGGTTAPAAA) are enriched in low complexity. Disordered stretches follow at residues 1 to 26 (MNTAAGPTGTAAGGTTAPAAAHDLSR) and 117 to 149 (GSALDAAHGNPGGPPLPGGWPHRPPDREERDDP). Residues 139-149 (RPPDREERDDP) are compositionally biased toward basic and acidic residues.

This sequence belongs to the cytochrome P450 family.

Its pathway is antibiotic biosynthesis; tylosin biosynthesis. Its function is as follows. Involved in the biosynthesis of the macrolide antibiotic tylosin derived from the polyketide lactone tylactone. TylM3 is required for the glycosylation of the 5-hydroxyl group of tylactone to yield 5-O-mycaminosytylactone. This chain is Protein TylM3, found in Streptomyces fradiae (Streptomyces roseoflavus).